The primary structure comprises 1072 residues: Zn(2)-C6 fungal-type transcription factor FTF1a (1072 aa).

Positions 178–205 (CMACRRKKIRCSGEKPACKHCLRSRILC) form a DNA-binding region, zn(2)-C6 fungal-type.

Its subcellular location is the nucleus. In terms of biological role, zn(2)-C6 fungal-type transcription factor that has a role in the establishment of the fungus within the plant and/or the progress of the disease. Regulates the expression of virulence factors such as SIX1 and SIX6. This Fusarium oxysporum f. sp. lycopersici (strain 4287 / CBS 123668 / FGSC 9935 / NRRL 34936) (Fusarium vascular wilt of tomato) protein is Zn(2)-C6 fungal-type transcription factor FTF1a.